The sequence spans 61 residues: Large ribosomal subunit protein bL32 (61 aa).

Positions 1-16 (MAVPRRKTSPSRRGMR) are enriched in basic residues. Residues 1-61 (MAVPRRKTSP…RQVLKVKKED (61 aa)) form a disordered region. The segment covering 17–44 (RSADALKKPTYVEDKDSGELRRPHHLDL) has biased composition (basic and acidic residues).

The protein belongs to the bacterial ribosomal protein bL32 family.

This is Large ribosomal subunit protein bL32 from Afipia carboxidovorans (strain ATCC 49405 / DSM 1227 / KCTC 32145 / OM5) (Oligotropha carboxidovorans).